Here is a 168-residue protein sequence, read N- to C-terminus: DAZ-associated protein 2 (168 aa).

A compositionally biased stretch (low complexity) spans 1–13; it reads MNSKGQYPTQPTY. The interval 1–25 is disordered; that stretch reads MNSKGQYPTQPTYPVQPPGNPVYPQ. The PPAY motif lies at 39–42; it reads PPAY. Serine 77 bears the Phosphoserine mark.

In terms of assembly, interacts with SOX6. Interacts with DAZ1 and DAZL. Interacts with IL17RB. May interact with FAM168B. Interacts with INCA1. Interacts with EIF4G1 and EIF4G2. Interacts (via PPAY motif) with NEDD4 (via WW domains). Interacts with transcription factor TCF4; the interaction results in localization of DAZAP2 to the nucleus. Interacts with transcription factors TCF7 and TCF7L1. Interacts with transcription factor LEF1. Interacts with serine/threonine-protein kinase HIPK2; the interaction results in phosphorylation of DAZAP2 which causes localization of DAZAP2 to the nucleus, reduces interaction of DAZAP2 with HIPK2 and prevents DAZAP2-dependent degradation of HIPK2. Interacts with ubiquitin ligase SIAH1; the interaction is decreased following phosphorylation of DAZAP2 by HIPK2. Interacts with TP53; the interaction is triggered by DNA damage. Post-translationally, ubiquitinated by SMURF2, leading to proteasomal degradation. Ubiquitinated by NEDD4, leading to proteasomal degradation. Following DNA damage, phosphorylated by HIPK2 which promotes DAZAP2 localization to the nucleus, reduces interaction of DAZAP2 with HIPK2 and SIAH1, and prevents DAZAP2-dependent ubiquitination of HIPK2 by E3 ubiquitin-protein ligase SIAH1 and subsequent HIPK2 proteasomal degradation.

The protein localises to the cytoplasm. Its subcellular location is the nucleus. It is found in the nucleus speckle. It localises to the nuclear body. The protein resides in the stress granule. In terms of biological role, in unstressed cells, promotes SIAH1-mediated polyubiquitination and degradation of the serine/threonine-protein kinase HIPK2, probably by acting as a loading factor that potentiates complex formation between HIPK2 and ubiquitin ligase SIAH1. In response to DNA damage, localizes to the nucleus following phosphorylation by HIPK2 and modulates the expression of a subset of TP53/p53 target genes by binding to TP53 at target gene promoters. This limits the expression of a number of cell death-mediating TP53 target genes, reducing DNA damage-induced cell death. Enhances the binding of transcription factor TCF7L2/TCF4, a Wnt signaling pathway effector, to the promoters of target genes. Plays a role in stress granule formation. The sequence is that of DAZ-associated protein 2 from Rattus norvegicus (Rat).